A 555-amino-acid chain; its full sequence is Potassium-transporting ATPase potassium-binding subunit (555 aa).

10 helical membrane passes run 2–22, 60–80, 130–150, 173–193, 246–266, 278–298, 374–394, 412–432, 483–503, and 525–545; these read IWVA…PTGI, QYAL…YFIF, IGIT…VMAF, VFLP…VPQT, MSNI…PFTY, ILFV…TTSE, AGFV…GLMV, LIAV…ALAL, LVMF…AASL, and GIFI…MLVL.

This sequence belongs to the KdpA family. As to quaternary structure, the system is composed of three essential subunits: KdpA, KdpB and KdpC.

The protein localises to the cell membrane. Its function is as follows. Part of the high-affinity ATP-driven potassium transport (or Kdp) system, which catalyzes the hydrolysis of ATP coupled with the electrogenic transport of potassium into the cytoplasm. This subunit binds the extracellular potassium ions and delivers the ions to the membrane domain of KdpB through an intramembrane tunnel. The protein is Potassium-transporting ATPase potassium-binding subunit of Bacillus cereus (strain ZK / E33L).